The sequence spans 160 residues: C-type lectin mosGCTL-1 (160 aa).

A signal peptide spans Met-1 to Gly-20. In terms of domain architecture, C-type lectin spans Thr-23 to Cys-140. 2 cysteine pairs are disulfide-bonded: Cys-44–Cys-140 and Cys-120–Cys-140. Residue Asn-76 is glycosylated (N-linked (GlcNAc...) asparagine).

As to quaternary structure, interacts with putative receptor-type tyrosine-protein phosphatase mosPTP-1; the interaction probably mediates the recruitment of West Nile virus particles in complex with C-type lectin mosGCTL-1 to the cell surface. (Microbial infection) Interacts with envelope protein E and virions of West Nile virus in a calcium-dependent manner. Female salivary gland (at protein level).

The protein resides in the secreted. Putative lectin. Functionally, (Microbial infection) Facilitates West Nile virus infection in mosquitoes probably via capturing viral particles and presenting them to a ligand on the cell surface, thereby facilitating viral entry. The protein is C-type lectin mosGCTL-1 of Aedes aegypti (Yellowfever mosquito).